Here is a 360-residue protein sequence, read N- to C-terminus: Photosystem II protein D1 (360 aa).

The next 3 helical transmembrane spans lie at Tyr-29–Thr-46, His-118–Phe-133, and Trp-142–Ala-156. Residue His-118 coordinates chlorophyll a. Trp-126 is a binding site for pheophytin a. 2 residues coordinate [CaMn4O5] cluster: Asp-170 and Glu-189. Residues Phe-197–Leu-218 form a helical membrane-spanning segment. His-198 lines the chlorophyll a pocket. A quinone is bound by residues His-215 and Ser-264–Phe-265. Position 215 (His-215) interacts with Fe cation. His-272 contacts Fe cation. Residues Phe-274–Leu-288 traverse the membrane as a helical segment. [CaMn4O5] cluster is bound by residues His-332, Glu-333, Asp-342, and Ala-344. The propeptide occupies Ser-345–Gly-360.

This sequence belongs to the reaction center PufL/M/PsbA/D family. As to quaternary structure, PSII is composed of 1 copy each of membrane proteins PsbA, PsbB, PsbC, PsbD, PsbE, PsbF, PsbH, PsbI, PsbJ, PsbK, PsbL, PsbM, PsbT, PsbX, PsbY, PsbZ, Psb30/Ycf12, at least 3 peripheral proteins of the oxygen-evolving complex and a large number of cofactors. It forms dimeric complexes. Requires The D1/D2 heterodimer binds P680, chlorophylls that are the primary electron donor of PSII, and subsequent electron acceptors. It shares a non-heme iron and each subunit binds pheophytin, quinone, additional chlorophylls, carotenoids and lipids. D1 provides most of the ligands for the Mn4-Ca-O5 cluster of the oxygen-evolving complex (OEC). There is also a Cl(-1) ion associated with D1 and D2, which is required for oxygen evolution. The PSII complex binds additional chlorophylls, carotenoids and specific lipids. as cofactor. Post-translationally, tyr-161 forms a radical intermediate that is referred to as redox-active TyrZ, YZ or Y-Z. C-terminally processed by CTPA; processing is essential to allow assembly of the oxygen-evolving complex and thus photosynthetic growth.

The protein localises to the plastid. The protein resides in the chloroplast thylakoid membrane. The enzyme catalyses 2 a plastoquinone + 4 hnu + 2 H2O = 2 a plastoquinol + O2. Photosystem II (PSII) is a light-driven water:plastoquinone oxidoreductase that uses light energy to abstract electrons from H(2)O, generating O(2) and a proton gradient subsequently used for ATP formation. It consists of a core antenna complex that captures photons, and an electron transfer chain that converts photonic excitation into a charge separation. The D1/D2 (PsbA/PsbD) reaction center heterodimer binds P680, the primary electron donor of PSII as well as several subsequent electron acceptors. This is Photosystem II protein D1 from Guillardia theta (Cryptophyte).